The primary structure comprises 433 residues: 3-phosphoshikimate 1-carboxyvinyltransferase (433 aa).

3-phosphoshikimate is bound by residues Lys-15, Ser-16, and Arg-20. Lys-15 lines the phosphoenolpyruvate pocket. Phosphoenolpyruvate contacts are provided by Gly-96 and Arg-124. Ser-169, Gln-171, Ser-195, Asp-318, and Lys-345 together coordinate 3-phosphoshikimate. Gln-171 serves as a coordination point for phosphoenolpyruvate. Asp-318 serves as the catalytic Proton acceptor. Phosphoenolpyruvate-binding residues include Arg-349 and Arg-393.

The protein belongs to the EPSP synthase family. In terms of assembly, monomer.

It localises to the cytoplasm. It carries out the reaction 3-phosphoshikimate + phosphoenolpyruvate = 5-O-(1-carboxyvinyl)-3-phosphoshikimate + phosphate. The protein operates within metabolic intermediate biosynthesis; chorismate biosynthesis; chorismate from D-erythrose 4-phosphate and phosphoenolpyruvate: step 6/7. Catalyzes the transfer of the enolpyruvyl moiety of phosphoenolpyruvate (PEP) to the 5-hydroxyl of shikimate-3-phosphate (S3P) to produce enolpyruvyl shikimate-3-phosphate and inorganic phosphate. The protein is 3-phosphoshikimate 1-carboxyvinyltransferase of Pelodictyon phaeoclathratiforme (strain DSM 5477 / BU-1).